The sequence spans 269 residues: Tryptophan synthase alpha chain (269 aa).

Residues Glu49 and Asp60 each act as proton acceptor in the active site.

This sequence belongs to the TrpA family. In terms of assembly, tetramer of two alpha and two beta chains.

It carries out the reaction (1S,2R)-1-C-(indol-3-yl)glycerol 3-phosphate + L-serine = D-glyceraldehyde 3-phosphate + L-tryptophan + H2O. It participates in amino-acid biosynthesis; L-tryptophan biosynthesis; L-tryptophan from chorismate: step 5/5. Its function is as follows. The alpha subunit is responsible for the aldol cleavage of indoleglycerol phosphate to indole and glyceraldehyde 3-phosphate. In Pseudomonas putida (strain ATCC 47054 / DSM 6125 / CFBP 8728 / NCIMB 11950 / KT2440), this protein is Tryptophan synthase alpha chain.